We begin with the raw amino-acid sequence, 175 residues long: uncharacterized protein (175 aa).

Residues 35–56 show a composition bias toward low complexity; sequence LIENSNYDNNNINNNNNNNNTD. Residues 35–70 form a disordered region; it reads LIENSNYDNNNINNNNNNNNTDNDNDNNNDNEPFYN. Helical transmembrane passes span 106 to 126 and 132 to 152; these read ILSFSIKSFLLLILYILFFNY and YFIILLSLNLIITLISIKSIF.

It localises to the membrane. This is an uncharacterized protein from Dictyostelium discoideum (Social amoeba).